Consider the following 441-residue polypeptide: tRNA modification GTPase MnmE (441 aa).

Residues arginine 24, glutamate 81, and lysine 121 each contribute to the (6S)-5-formyl-5,6,7,8-tetrahydrofolate site. Residues 218 to 366 (GMVVAIAGPP…LLRELTRFAA (149 aa)) form the TrmE-type G domain. GTP is bound by residues 228–233 (NVGKST), 247–253 (SPHAGTT), and 272–275 (DTAG). Residues serine 232 and threonine 253 each contribute to the Mg(2+) site. Lysine 441 lines the (6S)-5-formyl-5,6,7,8-tetrahydrofolate pocket.

It belongs to the TRAFAC class TrmE-Era-EngA-EngB-Septin-like GTPase superfamily. TrmE GTPase family. As to quaternary structure, homodimer. Heterotetramer of two MnmE and two MnmG subunits. It depends on K(+) as a cofactor.

It localises to the cytoplasm. Its function is as follows. Exhibits a very high intrinsic GTPase hydrolysis rate. Involved in the addition of a carboxymethylaminomethyl (cmnm) group at the wobble position (U34) of certain tRNAs, forming tRNA-cmnm(5)s(2)U34. This Rhodopseudomonas palustris (strain ATCC BAA-98 / CGA009) protein is tRNA modification GTPase MnmE.